The following is a 316-amino-acid chain: Acetaldehyde dehydrogenase (316 aa).

NAD(+) is bound at residue 11-14; sequence SGNI. The active-site Acyl-thioester intermediate is the C131. Residues 162–170 and N289 each bind NAD(+); that span reads SAGPGTRAN.

The protein belongs to the acetaldehyde dehydrogenase family. Interacts with MhpE.

It carries out the reaction acetaldehyde + NAD(+) + CoA = acetyl-CoA + NADH + H(+). The protein operates within aromatic compound metabolism; 3-phenylpropanoate degradation. In terms of biological role, catalyzes the conversion of acetaldehyde to acetyl-CoA, using NAD(+) and coenzyme A. Is the final enzyme in the meta-cleavage pathway for the degradation of aromatic compounds. The sequence is that of Acetaldehyde dehydrogenase from Escherichia coli O7:K1 (strain IAI39 / ExPEC).